A 682-amino-acid chain; its full sequence is DNA-directed RNA polymerase subunit beta' (682 aa).

The Zn(2+) site is built by Cys69, Cys71, Cys87, and Cys90. Mg(2+) is bound by residues Asp489, Asp491, and Asp493.

It belongs to the RNA polymerase beta' chain family. RpoC1 subfamily. In plastids the minimal PEP RNA polymerase catalytic core is composed of four subunits: alpha, beta, beta', and beta''. When a (nuclear-encoded) sigma factor is associated with the core the holoenzyme is formed, which can initiate transcription. Mg(2+) is required as a cofactor. It depends on Zn(2+) as a cofactor.

It localises to the plastid. It is found in the chloroplast. It catalyses the reaction RNA(n) + a ribonucleoside 5'-triphosphate = RNA(n+1) + diphosphate. Functionally, DNA-dependent RNA polymerase catalyzes the transcription of DNA into RNA using the four ribonucleoside triphosphates as substrates. The protein is DNA-directed RNA polymerase subunit beta' of Acorus gramineus (Dwarf sweet flag).